The chain runs to 229 residues: Cytidylate kinase (229 aa).

12-20 (GPSGAGKGT) contributes to the ATP binding site.

It belongs to the cytidylate kinase family. Type 1 subfamily.

The protein resides in the cytoplasm. The catalysed reaction is CMP + ATP = CDP + ADP. It catalyses the reaction dCMP + ATP = dCDP + ADP. In Serratia proteamaculans (strain 568), this protein is Cytidylate kinase.